Here is a 294-residue protein sequence, read N- to C-terminus: N-acetylmuramic acid 6-phosphate etherase (294 aa).

Residues 54–217 (VIQSFEEEGR…STASMIGVGK (164 aa)) form the SIS domain. E82 serves as the catalytic Proton donor. The active site involves E113.

The protein belongs to the GCKR-like family. MurNAc-6-P etherase subfamily. Homodimer.

It carries out the reaction N-acetyl-D-muramate 6-phosphate + H2O = N-acetyl-D-glucosamine 6-phosphate + (R)-lactate. Its pathway is amino-sugar metabolism; N-acetylmuramate degradation. In terms of biological role, specifically catalyzes the cleavage of the D-lactyl ether substituent of MurNAc 6-phosphate, producing GlcNAc 6-phosphate and D-lactate. This chain is N-acetylmuramic acid 6-phosphate etherase, found in Bacillus cereus (strain ZK / E33L).